A 305-amino-acid chain; its full sequence is Glycine--tRNA ligase alpha subunit (305 aa).

This sequence belongs to the class-II aminoacyl-tRNA synthetase family. As to quaternary structure, tetramer of two alpha and two beta subunits.

The protein resides in the cytoplasm. The enzyme catalyses tRNA(Gly) + glycine + ATP = glycyl-tRNA(Gly) + AMP + diphosphate. This chain is Glycine--tRNA ligase alpha subunit, found in Streptococcus pneumoniae (strain P1031).